Consider the following 318-residue polypeptide: Olfactory receptor 5G25 (318 aa).

Topologically, residues 1 to 25 (MMHRNQTVVTEFFFTGLTSSFHLQI) are extracellular. N-linked (GlcNAc...) asparagine glycosylation occurs at N5. A helical membrane pass occupies residues 26 to 46 (VLFLTFLCVYLATLLGNLGMI). Over 47–54 (ILIHQDTR) the chain is Cytoplasmic. The chain crosses the membrane as a helical span at residues 55–75 (LHIPMYFFLSHLSFVDACSSS). Over 76–99 (VISPKMLSDIFVDKKVISFLGCAI) the chain is Extracellular. Cysteines 97 and 189 form a disulfide. Residues 100 to 120 (QFCLFSQFVVTECFLLASMAY) traverse the membrane as a helical segment. Over 121–133 (DRYVAICKPLLYT) the chain is Cytoplasmic. Residues 134 to 154 (LIMSQRVCVQLVIGPYSIGLI) traverse the membrane as a helical segment. At 155–196 (STVVHTTSAFILPYCGPNLINHFFCDLLPVLSLACADTQMNK) the chain is on the extracellular side. The helical transmembrane segment at 197 to 217 (HLLFIMAGILGVFSGIIILVS) threads the bilayer. Residues 218-237 (YVYIAITILKINSADGRRKA) lie on the Cytoplasmic side of the membrane. A helical transmembrane segment spans residues 238–258 (FSTCSSHLTAVSILYGTLFFI). At 259-271 (YVRPSSSFSLDIN) the chain is on the extracellular side. A helical membrane pass occupies residues 272-292 (KVVSLFYTAVIPMLNPFIYSL). Residues 293–318 (RNKEVKDALIRTFEKKFCYSLQDKIL) are Cytoplasmic-facing.

It belongs to the G-protein coupled receptor 1 family.

It is found in the cell membrane. Its function is as follows. Potential odorant receptor. The chain is Olfactory receptor 5G25 from Mus musculus (Mouse).